Consider the following 90-residue polypeptide: MAIRCEKFVVSGIVQGVGFRYHTSHQGLKLNLVGYAKNLYNGDVEVIACGEPLKIEEFAKWLEQGPKTARVDELKREEITCREYQGFEIL.

One can recognise an Acylphosphatase-like domain in the interval C5–L90. Catalysis depends on residues R20 and N38.

It belongs to the acylphosphatase family.

It carries out the reaction an acyl phosphate + H2O = a carboxylate + phosphate + H(+). This chain is Acylphosphatase (acyP), found in Vibrio vulnificus (strain CMCP6).